Here is a 117-residue protein sequence, read N- to C-terminus: DNA-directed RNA polymerase subunit omega (117 aa).

The protein belongs to the RNA polymerase subunit omega family. In terms of assembly, the RNAP catalytic core consists of 2 alpha, 1 beta, 1 beta' and 1 omega subunit. When a sigma factor is associated with the core the holoenzyme is formed, which can initiate transcription.

The catalysed reaction is RNA(n) + a ribonucleoside 5'-triphosphate = RNA(n+1) + diphosphate. Promotes RNA polymerase assembly. Latches the N- and C-terminal regions of the beta' subunit thereby facilitating its interaction with the beta and alpha subunits. The polypeptide is DNA-directed RNA polymerase subunit omega (Jannaschia sp. (strain CCS1)).